The sequence spans 76 residues: MDIITLAEVAGNLSVIGYGIGTLGPGIGLGILFGKAMESTARQPEMSGKIQTIMFIGLALVEVLALIGFVAALIIR.

Transmembrane regions (helical) follow at residues 13–33 (LSVI…GILF) and 55–75 (FIGL…ALII).

It belongs to the ATPase C chain family. As to quaternary structure, F-type ATPases have 2 components, F(1) - the catalytic core - and F(0) - the membrane proton channel. F(1) has five subunits: alpha(3), beta(3), gamma(1), delta(1), epsilon(1). F(0) has three main subunits: a(1), b(2) and c(10-14). The alpha and beta chains form an alternating ring which encloses part of the gamma chain. F(1) is attached to F(0) by a central stalk formed by the gamma and epsilon chains, while a peripheral stalk is formed by the delta and b chains.

It localises to the cell membrane. Its function is as follows. F(1)F(0) ATP synthase produces ATP from ADP in the presence of a proton or sodium gradient. F-type ATPases consist of two structural domains, F(1) containing the extramembraneous catalytic core and F(0) containing the membrane proton channel, linked together by a central stalk and a peripheral stalk. During catalysis, ATP synthesis in the catalytic domain of F(1) is coupled via a rotary mechanism of the central stalk subunits to proton translocation. Key component of the F(0) channel; it plays a direct role in translocation across the membrane. A homomeric c-ring of between 10-14 subunits forms the central stalk rotor element with the F(1) delta and epsilon subunits. The chain is ATP synthase subunit c from Bifidobacterium longum subsp. infantis (strain ATCC 15697 / DSM 20088 / JCM 1222 / NCTC 11817 / S12).